The following is a 457-amino-acid chain: ATP-dependent protease ATPase subunit HslU (457 aa).

ATP-binding positions include Ile18 and 60-65; that span reads GVGKTE. Positions 142–171 are disordered; the sequence is KQPGMGFFNPAAPEEQEEQPSADQSSTREK. ATP-binding residues include Asp269, Glu335, and Arg407.

The protein belongs to the ClpX chaperone family. HslU subfamily. As to quaternary structure, a double ring-shaped homohexamer of HslV is capped on each side by a ring-shaped HslU homohexamer. The assembly of the HslU/HslV complex is dependent on binding of ATP.

It is found in the cytoplasm. In terms of biological role, ATPase subunit of a proteasome-like degradation complex; this subunit has chaperone activity. The binding of ATP and its subsequent hydrolysis by HslU are essential for unfolding of protein substrates subsequently hydrolyzed by HslV. HslU recognizes the N-terminal part of its protein substrates and unfolds these before they are guided to HslV for hydrolysis. The protein is ATP-dependent protease ATPase subunit HslU of Maridesulfovibrio salexigens (strain ATCC 14822 / DSM 2638 / NCIMB 8403 / VKM B-1763) (Desulfovibrio salexigens).